Here is a 439-residue protein sequence, read N- to C-terminus: tRNA-2-methylthio-N(6)-dimethylallyladenosine synthase (439 aa).

In terms of domain architecture, MTTase N-terminal spans 2–116 (LKVYIETMGC…ISQVIHKEKA (115 aa)). [4Fe-4S] cluster contacts are provided by Cys-11, Cys-47, Cys-79, Cys-149, Cys-153, and Cys-156. Positions 135 to 368 (KKAEVRSLLN…QNRHKEILEE (234 aa)) constitute a Radical SAM core domain. The region spanning 371–437 (RLEVGKTHVV…KGRLMATTKN (67 aa)) is the TRAM domain.

Belongs to the methylthiotransferase family. MiaB subfamily. As to quaternary structure, monomer. Requires [4Fe-4S] cluster as cofactor.

It localises to the cytoplasm. The catalysed reaction is N(6)-dimethylallyladenosine(37) in tRNA + (sulfur carrier)-SH + AH2 + 2 S-adenosyl-L-methionine = 2-methylsulfanyl-N(6)-dimethylallyladenosine(37) in tRNA + (sulfur carrier)-H + 5'-deoxyadenosine + L-methionine + A + S-adenosyl-L-homocysteine + 2 H(+). Catalyzes the methylthiolation of N6-(dimethylallyl)adenosine (i(6)A), leading to the formation of 2-methylthio-N6-(dimethylallyl)adenosine (ms(2)i(6)A) at position 37 in tRNAs that read codons beginning with uridine. The polypeptide is tRNA-2-methylthio-N(6)-dimethylallyladenosine synthase (Helicobacter acinonychis (strain Sheeba)).